The chain runs to 858 residues: Volume-regulated anion channel subunit LRRC8D (858 aa).

The Cytoplasmic portion of the chain corresponds to 1–22 (MFTLAEVASLNDIQPTYRILKP). Residues 23 to 48 (WWDVFMDYLAVVMLMVAIFAGTMQLT) form a helical membrane-spanning segment. The Extracellular segment spans residues 49–163 (KDQVVCLPVL…YHLALPWYSK (115 aa)). A disulfide bridge connects residues C54 and C354. The tract at residues 118 to 137 (AESTFPSQETKKEKRDPTGR) is disordered. Residues 126–137 (ETKKEKRDPTGR) are compositionally biased toward basic and acidic residues. The helical transmembrane segment at 164–182 (YFPYLALIHTIILMVSSNF) threads the bilayer. Over 183–308 (WFKYPKTCSK…EDSDLIYKLY (126 aa)) the chain is Cytoplasmic. Residues 221–251 (SEENKQRITGAQTLPKHVSTSSDEGSPSAST) form a disordered region. Polar residues predominate over residues 227 to 251 (RITGAQTLPKHVSTSSDEGSPSAST). 3 positions are modified to phosphoserine: S241, S242, and S246. A helical membrane pass occupies residues 309-330 (VVQTLIKTAKFIFILCYTANFV). The Extracellular segment spans residues 331-360 (NAISFEHVCKPKVEHLTGYEVFECTHNMAY). A helical transmembrane segment spans residues 361–386 (MLKKLLISYISIICVYGFICLYTLFW). Topologically, residues 387–858 (LFRIPLKEYS…DVNVPFANGI (472 aa)) are cytoplasmic. LRR repeat units follow at residues 514 to 534 (NLQELHLCHCPAKVEQTAFSF), 538 to 559 (HLRCLHVKFTDVAEIPAWVYLL), 561 to 582 (NLRELYLIGNLNSENNKMIGLE), 589 to 609 (HLKILHVKSNLTKVPSNITDV), 612 to 632 (HLTKLVIHNDGTKLLVLNSLK), 636 to 657 (NVAELELQNCELERIPHAIFSL), 659 to 680 (NLQELDLKSNSIRTIEEIISFQ), 684 to 705 (RLTCLKLWHNKIVAIPPSITHV), 707 to 728 (NLESLYFSNNKLESLPVAVFSL), 730 to 751 (KLRCLDVSYNNISTIPIEIGLL), 753 to 774 (NLQHLHITGNKVDVLPKQLFKC), 776 to 797 (KLRTLNLGQNCIASLPEKISQL), and 799 to 820 (QLTQLELKGNCLDRLPAQLGQC).

Belongs to the LRRC8 family. As to quaternary structure, heterohexamer; oligomerizes with other LRRC8 proteins (LRRC8A, LRRC8B, LRRC8C and/or LRRC8E) to form a heterohexamer. In vivo, the subunit composition may depend primarily on expression levels, and heterooligomeric channels containing various proportions of the different LRRC8 proteins may coexist.

It is found in the cell membrane. The protein resides in the endoplasmic reticulum membrane. The enzyme catalyses chloride(in) = chloride(out). The catalysed reaction is iodide(out) = iodide(in). It carries out the reaction taurine(out) = taurine(in). In terms of biological role, non-essential component of the volume-regulated anion channel (VRAC, also named VSOAC channel), an anion channel required to maintain a constant cell volume in response to extracellular or intracellular osmotic changes. The VRAC channel conducts iodide better than chloride and can also conduct organic osmolytes like taurine. Plays a redundant role in the efflux of amino acids, such as aspartate, in response to osmotic stress. Channel activity requires LRRC8A plus at least one other family member (LRRC8B, LRRC8C, LRRC8D or LRRC8E); channel characteristics depend on the precise subunit composition. Also acts as a regulator of glucose-sensing in pancreatic beta cells: VRAC currents, generated in response to hypotonicity- or glucose-induced beta cell swelling, depolarize cells, thereby causing electrical excitation, leading to increase glucose sensitivity and insulin secretion. VRAC channels containing LRRC8D inhibit transport of immunoreactive cyclic dinucleotide GMP-AMP (2'-3'-cGAMP), an immune messenger produced in response to DNA virus in the cytosol. This is Volume-regulated anion channel subunit LRRC8D from Rattus norvegicus (Rat).